The chain runs to 363 residues: DNA replication and repair protein RecF (363 aa).

33 to 40 (GDNGQGKT) contacts ATP.

The protein belongs to the RecF family.

It is found in the cytoplasm. In terms of biological role, the RecF protein is involved in DNA metabolism; it is required for DNA replication and normal SOS inducibility. RecF binds preferentially to single-stranded, linear DNA. It also seems to bind ATP. The chain is DNA replication and repair protein RecF from Tropheryma whipplei (strain TW08/27) (Whipple's bacillus).